Here is a 358-residue protein sequence, read N- to C-terminus: MSKYWNDKVREIEPYVPGEQPKDRKYIKLNTNENPYPPSDKVLEAMRNAVNGDLKLYPDPTCSELTSEIANYYKLDENEIFIGNGSDEILAFSFMTFFSKNKKILFPDISYTFYKVYAELFDLNYELVKLDDNFDIPLEELKKTNGGVIIPNPNAPTGKYINTESLKSLIEANKDRVVIIDEAYIDFGGQSMVKYMHEYDNLLVIQTLSKSRSLAGLRVGFALGHKDLIEGLNRIKNSINSYTIDRVALAGAKAAIQDSKYFEEITKKIVKTREKVVKELEKLDFRVLKSESNFVFASHNNASGKFIYENLKCQGILVRYFDKERIDNFLRITIGTNEEMDILIEKLRFILSNNQKEL.

An N6-(pyridoxal phosphate)lysine modification is found at K210.

The protein belongs to the class-II pyridoxal-phosphate-dependent aminotransferase family. Histidinol-phosphate aminotransferase subfamily. Homodimer. Requires pyridoxal 5'-phosphate as cofactor.

It carries out the reaction L-histidinol phosphate + 2-oxoglutarate = 3-(imidazol-4-yl)-2-oxopropyl phosphate + L-glutamate. The protein operates within amino-acid biosynthesis; L-histidine biosynthesis; L-histidine from 5-phospho-alpha-D-ribose 1-diphosphate: step 7/9. The sequence is that of Histidinol-phosphate aminotransferase from Clostridium beijerinckii (strain ATCC 51743 / NCIMB 8052) (Clostridium acetobutylicum).